Here is a 358-residue protein sequence, read N- to C-terminus: Uroporphyrinogen decarboxylase (358 aa).

Substrate contacts are provided by residues 27 to 31 (RQAGR), aspartate 77, tyrosine 154, serine 209, and histidine 327.

The protein belongs to the uroporphyrinogen decarboxylase family. As to quaternary structure, homodimer.

The protein resides in the cytoplasm. It carries out the reaction uroporphyrinogen III + 4 H(+) = coproporphyrinogen III + 4 CO2. It functions in the pathway porphyrin-containing compound metabolism; protoporphyrin-IX biosynthesis; coproporphyrinogen-III from 5-aminolevulinate: step 4/4. Catalyzes the decarboxylation of four acetate groups of uroporphyrinogen-III to yield coproporphyrinogen-III. The chain is Uroporphyrinogen decarboxylase from Azoarcus sp. (strain BH72).